The sequence spans 374 residues: MDLYQQGLQPLLFSALKADPETVHRQLMRTCAWLDRNVDQGLAQGLQRRLASSLQVEDPRLSQSLWGLSFANPIGLAAGFDKDGVATNIWPRFGFGFAEVGTVTFHAQPGNPQPRLFRLPEDQAALNRMGFNNQGAAAMAKVIAASLDRQARSYPLGINLGKSKVTPLEQAVADYVGSFQLLKTYGDYFVVNVSSPNTPGLRSLQAVEQLAPILAGLQAENTEGKPLLVKIAPDLEWKDIAAIVDLAQVHQLAGIIATNTTIRRDLKTERIAATGNVPSEEAGGISGAPVRSRSTDVIRFIHKQTQGQLPIIGVGGIFTAEDAWEKLCAGASLLQVYTGWVYEGPWMVRRILEGLLVKMQEEGIQQLSEIVGQK.

FMN is bound by residues 78 to 82 and threonine 102; that span reads AGFDK. A substrate-binding site is contributed by lysine 82. Substrate is bound at residue 127–131; the sequence is NRMGF. The FMN site is built by asparagine 159 and asparagine 192. A substrate-binding site is contributed by asparagine 192. Catalysis depends on serine 195, which acts as the Nucleophile. Asparagine 197 lines the substrate pocket. Residues lysine 230 and threonine 258 each coordinate FMN. 259-260 contacts substrate; sequence NT. FMN contacts are provided by residues glycine 287, glycine 316, and 337 to 338; that span reads YT.

Belongs to the dihydroorotate dehydrogenase family. Type 2 subfamily. Monomer. Requires FMN as cofactor.

Its subcellular location is the cell membrane. The enzyme catalyses (S)-dihydroorotate + a quinone = orotate + a quinol. It participates in pyrimidine metabolism; UMP biosynthesis via de novo pathway; orotate from (S)-dihydroorotate (quinone route): step 1/1. Catalyzes the conversion of dihydroorotate to orotate with quinone as electron acceptor. The sequence is that of Dihydroorotate dehydrogenase (quinone) from Acaryochloris marina (strain MBIC 11017).